Here is an 82-residue protein sequence, read N- to C-terminus: Penaeidin-3e (82 aa).

A signal peptide spans 1–19 (MRLVVCLVFLAPFALVCHG). Glutamine 20 carries the post-translational modification Pyrrolidone carboxylic acid. Cystine bridges form between cysteine 51-cysteine 66, cysteine 55-cysteine 73, and cysteine 67-cysteine 74. Serine 81 bears the Serine amide mark.

Belongs to the penaeidin family.

It is found in the cytoplasmic granule. In terms of biological role, antibacterial and antifungal activity. Presents chitin-binding activity. The sequence is that of Penaeidin-3e from Penaeus vannamei (Whiteleg shrimp).